Reading from the N-terminus, the 37-residue chain is PHAFPFLTPEQKKELSDIAHKIVAPGKGILAADESTG.

This sequence belongs to the class I fructose-bisphosphate aldolase family. Tetramer.

It carries out the reaction beta-D-fructose 1,6-bisphosphate = D-glyceraldehyde 3-phosphate + dihydroxyacetone phosphate. It participates in carbohydrate degradation; glycolysis; D-glyceraldehyde 3-phosphate and glycerone phosphate from D-glucose: step 4/4. In terms of biological role, plays a key role in glycolysis and gluconeogenesis. The protein is Fructose-bisphosphate aldolase A of Thunnus albacares (Yellowfin tuna).